The sequence spans 123 residues: DNA-directed RNA polymerase I subunit RPA12 (123 aa).

Cys17, Cys20, Cys35, Cys38, Cys84, and Cys87 together coordinate Zn(2+). Residues 17-38 (CPDCGSVLPLPGVQDTVICPRC) form a C4-type zinc finger. The TFIIS-type zinc finger occupies 80–120 (VDRRCSRCGHEGMAYYTRQMRSADEGQTVFYTCINCKFQEK). A Hairpin motif is present at residues 103–104 (DE). Residues Cys112 and Cys115 each coordinate Zn(2+).

Belongs to the archaeal RpoM/eukaryotic RPA12/RPB9/RPC11 RNA polymerase family. Component of the RNA polymerase I (Pol I) complex consisting of 13 subunits: a ten-subunit catalytic core composed of POLR1A/RPA1, POLR1B/RPA2, POLR1C/RPAC1, POLR1D/RPAC2, POLR1H/RPA12, POLR2E/RPABC1, POLR2F/RPABC2, POLR2H/RPABC3, POLR2K/RPABC4 and POLR2L/RPABC5; a mobile stalk subunit POLR1F/RPA43 protruding from the core and additional subunits homologous to general transcription factors POLR1E/RPA49 and POLR1G/RPA34. Part of Pol I pre-initiation complex (PIC), in which Pol I core assembles with RRN3 and promoter-bound UTBF and SL1/TIF-IB complex.

The protein localises to the nucleus. It is found in the nucleolus. In terms of biological role, core component of RNA polymerase I (Pol I), a DNA-dependent RNA polymerase which synthesizes ribosomal RNA precursors using the four ribonucleoside triphosphates as substrates. Can mediate Pol I proofreading of the nascent RNA transcript. Anchors into the Pol I active site to monitor transcription fidelity and cleave mis-incorporated 5'-ribonucleotides. This chain is DNA-directed RNA polymerase I subunit RPA12, found in Rattus norvegicus (Rat).